A 329-amino-acid polypeptide reads, in one-letter code: Serpentine receptor class alpha-3 (329 aa).

7 helical membrane passes run 25–45 (LIYF…LKVI), 57–77 (ILLY…GITI), 104–124 (YLEM…GLLF), 144–164 (GIIT…IIIW), 187–207 (TMFF…SLLI), 238–258 (ICFL…GVFL), and 273–293 (FWVV…ILLI).

This sequence belongs to the nematode receptor-like protein sra family.

It localises to the membrane. The polypeptide is Serpentine receptor class alpha-3 (sra-3) (Caenorhabditis elegans).